Reading from the N-terminus, the 57-residue chain is Cytochrome b-c1 complex subunit 10, mitochondrial (57 aa).

Topologically, residues 1–23 (MAGTSGLLNAVKPKIQTIDIQAA) are mitochondrial matrix. Residues 24–44 (AGWGIAAAAGAIWVVQPFGWI) traverse the membrane as a helical segment. The Mitochondrial intermembrane segment spans residues 45–57 (KKTFIDPPPTEEK).

This sequence belongs to the UQCR11/QCR10 family. As to quaternary structure, component of the ubiquinol-cytochrome c oxidoreductase (cytochrome b-c1 complex, complex III, CIII), a multisubunit enzyme composed of 10 subunits. The complex is composed of 3 respiratory subunits cytochrome b (MT-CYB), cytochrome c1 (CYC1-1 or CYC1-2) and Rieske protein (UCR1-1 or UCR1-2), 2 core protein subunits MPPalpha1 (or MPPalpha2) and MPPB, and 5 low-molecular weight protein subunits QCR7-1 (or QCR7-2), UCRQ-1 (or UCRQ-2), QCR9, UCRY and probably QCR6-1 (or QCR6-2). The complex exists as an obligatory dimer and forms supercomplexes (SCs) in the inner mitochondrial membrane with NADH-ubiquinone oxidoreductase (complex I, CI), resulting in different assemblies (supercomplexes SCI(1)III(2) and SCI(2)III(4)).

The protein localises to the mitochondrion inner membrane. Its function is as follows. Component of the ubiquinol-cytochrome c oxidoreductase, a multisubunit transmembrane complex that is part of the mitochondrial electron transport chain which drives oxidative phosphorylation. The respiratory chain contains 3 multisubunit complexes succinate dehydrogenase (complex II, CII), ubiquinol-cytochrome c oxidoreductase (cytochrome b-c1 complex, complex III, CIII) and cytochrome c oxidase (complex IV, CIV), that cooperate to transfer electrons derived from NADH and succinate to molecular oxygen, creating an electrochemical gradient over the inner membrane that drives transmembrane transport and the ATP synthase. The cytochrome b-c1 complex catalyzes electron transfer from ubiquinol to cytochrome c, linking this redox reaction to translocation of protons across the mitochondrial inner membrane, with protons being carried across the membrane as hydrogens on the quinol. In the process called Q cycle, 2 protons are consumed from the matrix, 4 protons are released into the intermembrane space and 2 electrons are passed to cytochrome c. The sequence is that of Cytochrome b-c1 complex subunit 10, mitochondrial (UCRY) from Arabidopsis thaliana (Mouse-ear cress).